Reading from the N-terminus, the 279-residue chain is Pantothenate synthetase (279 aa).

ATP is bound at residue 31–38 (MGALHEGH). Catalysis depends on His-38, which acts as the Proton donor. Gln-62 is a (R)-pantoate binding site. Gln-62 contacts beta-alanine. 148–151 (GEKD) contributes to the ATP binding site. Residue Gln-154 coordinates (R)-pantoate. Residues Val-177 and 185 to 188 (LSSR) each bind ATP.

The protein belongs to the pantothenate synthetase family. Homodimer.

The protein localises to the cytoplasm. It catalyses the reaction (R)-pantoate + beta-alanine + ATP = (R)-pantothenate + AMP + diphosphate + H(+). Its pathway is cofactor biosynthesis; (R)-pantothenate biosynthesis; (R)-pantothenate from (R)-pantoate and beta-alanine: step 1/1. Catalyzes the condensation of pantoate with beta-alanine in an ATP-dependent reaction via a pantoyl-adenylate intermediate. This is Pantothenate synthetase from Cereibacter sphaeroides (strain ATCC 17029 / ATH 2.4.9) (Rhodobacter sphaeroides).